Reading from the N-terminus, the 148-residue chain is Putative anti-anti-sigma factor Rv2638 (148 aa).

In terms of domain architecture, STAS spans Leu30–Gly141.

Belongs to the anti-sigma-factor antagonist family. As to quaternary structure, interacts with unphosphorylated OprA.

The sequence is that of Putative anti-anti-sigma factor Rv2638 from Mycobacterium tuberculosis (strain ATCC 25618 / H37Rv).